Consider the following 561-residue polypeptide: Putative transport protein YbjL (561 aa).

The next 5 helical transmembrane spans lie at 8-28, 32-52, 66-86, 94-114, and 158-178; these read LLNG…LCLG, LGSV…LLGQ, FMLF…SIFF, MLAL…GKLF, and NLSL…IVGA. 2 consecutive RCK C-terminal domains span residues 200 to 288 and 292 to 373; these read RGLD…SLRN and VFDR…RIGF. Transmembrane regions (helical) follow at residues 383–403, 406–426, 447–467, 475–495, and 540–560; these read LLAF…TFQF, FSFG…LGFL, FGLM…ISNG, MLIA…LFGA, and AIAN…WPGL.

Belongs to the AAE transporter (TC 2.A.81) family. YbjL subfamily.

Its subcellular location is the cell membrane. This Salmonella gallinarum (strain 287/91 / NCTC 13346) protein is Putative transport protein YbjL.